Here is a 110-residue protein sequence, read N- to C-terminus: UPF0060 membrane protein PFL_4337 (110 aa).

4 consecutive transmembrane segments (helical) span residues 5-25 (LWFF…WMWL), 31-51 (ALWV…LTKV), 59-79 (AYAA…AVVE), and 84-104 (LGSD…ILFG).

It belongs to the UPF0060 family.

The protein resides in the cell inner membrane. The sequence is that of UPF0060 membrane protein PFL_4337 from Pseudomonas fluorescens (strain ATCC BAA-477 / NRRL B-23932 / Pf-5).